Consider the following 271-residue polypeptide: Chymotrypsin-like elastase family member 2A (271 aa).

The signal sequence occupies residues 1 to 16 (MIRTLLLSALVAGALS). Residues 17–30 (CGYPTYEVQHDVSR) constitute a propeptide, activation peptide. One can recognise a Peptidase S1 domain in the interval 31 to 269 (VVGGQEASPN…YIDWINSVIA (239 aa)). The cysteines at positions 60 and 76 are disulfide-linked. Catalysis depends on charge relay system residues His75 and Asp123. 3 cysteine pairs are disulfide-bonded: Cys157–Cys224, Cys188–Cys204, and Cys214–Cys245. The Charge relay system role is filled by Ser218.

This sequence belongs to the peptidase S1 family. Elastase subfamily. Interacts with CPA1. Interacts with SERPINA1. In terms of tissue distribution, pancreas.

The protein localises to the secreted. The catalysed reaction is Preferential cleavage: Leu-|-Xaa, Met-|-Xaa and Phe-|-Xaa. Hydrolyzes elastin.. In terms of biological role, elastase that enhances insulin signaling and might have a physiologic role in cellular glucose metabolism. Circulates in plasma and reduces platelet hyperactivation, triggers both insulin secretion and degradation, and increases insulin sensitivity. This is Chymotrypsin-like elastase family member 2A (Cela2a) from Rattus norvegicus (Rat).